Reading from the N-terminus, the 77-residue chain is uncharacterized protein (77 aa).

This is an uncharacterized protein from Salmonella typhimurium (strain LT2 / SGSC1412 / ATCC 700720).